The following is a 467-amino-acid chain: UDP-N-acetylmuramoylalanine--D-glutamate ligase (467 aa).

121–127 (GTNGKST) contributes to the ATP binding site.

It belongs to the MurCDEF family.

It localises to the cytoplasm. The catalysed reaction is UDP-N-acetyl-alpha-D-muramoyl-L-alanine + D-glutamate + ATP = UDP-N-acetyl-alpha-D-muramoyl-L-alanyl-D-glutamate + ADP + phosphate + H(+). Its pathway is cell wall biogenesis; peptidoglycan biosynthesis. Cell wall formation. Catalyzes the addition of glutamate to the nucleotide precursor UDP-N-acetylmuramoyl-L-alanine (UMA). This Brucella suis biovar 1 (strain 1330) protein is UDP-N-acetylmuramoylalanine--D-glutamate ligase.